A 447-amino-acid polypeptide reads, in one-letter code: UDP-N-acetylmuramate--L-alanine ligase (447 aa).

G115–S121 is an ATP binding site.

This sequence belongs to the MurCDEF family.

It is found in the cytoplasm. The enzyme catalyses UDP-N-acetyl-alpha-D-muramate + L-alanine + ATP = UDP-N-acetyl-alpha-D-muramoyl-L-alanine + ADP + phosphate + H(+). The protein operates within cell wall biogenesis; peptidoglycan biosynthesis. Its function is as follows. Cell wall formation. The chain is UDP-N-acetylmuramate--L-alanine ligase from Streptococcus thermophilus (strain CNRZ 1066).